The chain runs to 690 residues: Protein hook (690 aa).

Residues 6–122 (MEIYESLIRW…RLLQLILGCA (117 aa)) enclose the Calponin-homology (CH) domain. 2 coiled-coil regions span residues 134–515 (QIME…HHAE) and 546–577 (ETTQHQLSNLHTKIANLEAALVVKDQELQAAD).

This sequence belongs to the hook family. Homodimer. Interacts with microtubules via its N-terminus.

The protein resides in the cytoplasm. The protein localises to the cytoskeleton. Its subcellular location is the endosome. Involved in endocytic trafficking. Probably acts as a cytoskeletal linker protein that tethers endosome vesicles to the cytoskeleton. The chain is Protein hook from Anopheles gambiae (African malaria mosquito).